A 411-amino-acid chain; its full sequence is Probable peptidoglycan glycosyltransferase FtsW (411 aa).

Over 1-40 (MLERMLPFLGRKRDKAAADLPVRVGHSAPRNSRMLEYDQN) the chain is Cytoplasmic. A helical transmembrane segment spans residues 41–61 (LVWVTLLLLAYGLVMVYSATI). Residues 62 to 81 (SFHDSPRYAQWSPYHYFIRD) are Periplasmic-facing. A helical transmembrane segment spans residues 82-102 (LFSIAAALLASWIVVQIPMAE). Over 103 to 109 (LQKWSMR) the chain is Cytoplasmic. The helical transmembrane segment at 110 to 130 (FFFLSLIGLVLVLLPHIGKDV) threads the bilayer. At 131–136 (NGSKRW) the chain is on the periplasmic side. Residues 137–157 (VVFPGGLNFQPSELVKLTALI) form a helical membrane-spanning segment. The Cytoplasmic portion of the chain corresponds to 158–172 (YAADFMVRKQEVKQS). Residues 173-193 (LLKTFLPMMAVMMIVGVLLLA) form a helical membrane-spanning segment. At 194 to 196 (EPD) the chain is on the periplasmic side. A helical membrane pass occupies residues 197 to 217 (MGAFLVIASITLAILFLGGAN). The Cytoplasmic portion of the chain corresponds to 218–219 (GK). A helical transmembrane segment spans residues 220–240 (LFSVFSVAVIGAFVLMIVLSP). At 241 to 298 (WRRDRIFAYLNPWSESNALGSAYQLSHALIAMGRGEWFGVGLGGSIEKLHYLPEAHTD) the chain is on the periplasmic side. A helical membrane pass occupies residues 299–319 (FLLAIIGEELGLVGVGVVIFA). At 320 to 347 (FYWIVRRAFDIGRQALVLDRMYSALVAQ) the chain is on the cytoplasmic side. A helical membrane pass occupies residues 348-368 (GIGVWIGGQAFINIGVNLGLL). Residues 369–374 (PTKGLT) are Periplasmic-facing. The helical transmembrane segment at 375 to 395 (LPLMSYGGSALLLNCMAIAVL) threads the bilayer. The Cytoplasmic segment spans residues 396-411 (LRVDFENRILMRGGHV).

This sequence belongs to the SEDS family. FtsW subfamily.

It is found in the cell inner membrane. It carries out the reaction [GlcNAc-(1-&gt;4)-Mur2Ac(oyl-L-Ala-gamma-D-Glu-L-Lys-D-Ala-D-Ala)](n)-di-trans,octa-cis-undecaprenyl diphosphate + beta-D-GlcNAc-(1-&gt;4)-Mur2Ac(oyl-L-Ala-gamma-D-Glu-L-Lys-D-Ala-D-Ala)-di-trans,octa-cis-undecaprenyl diphosphate = [GlcNAc-(1-&gt;4)-Mur2Ac(oyl-L-Ala-gamma-D-Glu-L-Lys-D-Ala-D-Ala)](n+1)-di-trans,octa-cis-undecaprenyl diphosphate + di-trans,octa-cis-undecaprenyl diphosphate + H(+). It functions in the pathway cell wall biogenesis; peptidoglycan biosynthesis. Functionally, peptidoglycan polymerase that is essential for cell division. This is Probable peptidoglycan glycosyltransferase FtsW from Thiomonas intermedia (strain K12) (Thiobacillus intermedius).